A 232-amino-acid chain; its full sequence is Protein TIFY 10c (232 aa).

Positions P54–L73 are disordered. The Tify domain maps to A114–T149. The disordered stretch occupies residues G152–P177. Positions N156–L165 are enriched in polar residues. Positions P177–Q202 match the Jas motif. The Nuclear localization signal signature appears at A179 to R186.

The protein belongs to the TIFY/JAZ family. Interacts with BHLH148. Interacts with COI1B in a coronatine-dependent manner. Coronatine is an analog of jasmonoyl isoleucine (JA-Ile). Interacts with TIFY5/JAZ2, TIFY6B/JAZ4, TIFY9/JAZ5, TIFY11A, TIFY11D/JAZ12, TIFY11G/JAZ15 and NINJA1. Ubiquitinated. Increase in jasmonoyl isoleucine (JA-Ile) levels mediates its degradation via COI1B-mediated proteasome pathway.

The protein localises to the nucleus. It localises to the cytoplasm. The protein resides in the cytosol. Its function is as follows. Repressor of jasmonate (JA) responses. Acts as a repressor of JA-induced resistance to the bacterial blight pathogen Xanthomonas oryzae pv. oryzae (Xoo). Regulates JA-induced accumulation of linalool at the transcriptional level of linalool synthase gene LIS. Linalool is important for resistance to bacterial blight pathogen Xoo. The polypeptide is Protein TIFY 10c (Oryza sativa subsp. japonica (Rice)).